Here is a 107-residue protein sequence, read N- to C-terminus: Inner membrane protein YiaW (107 aa).

At 1-6 (MFLDYF) the chain is on the cytoplasmic side. Residues 7-29 (ALGVLIFVFLVIFYGIIILHDIP) form a helical membrane-spanning segment. Topologically, residues 30 to 43 (YLIAKKRNHPHADA) are periplasmic. The chain crosses the membrane as a helical span at residues 44-66 (IHVAGWVSLFTLHVIWPFLWIWA). Residues 67-107 (TLYRPERGWGMQSHDSSVMQLQQRIAGLEKQLADIKSSSAE) lie on the Cytoplasmic side of the membrane.

The protein to E.coli YibI.

Its subcellular location is the cell inner membrane. The sequence is that of Inner membrane protein YiaW (yiaW) from Escherichia coli O157:H7.